The sequence spans 316 residues: 4-hydroxy-3-methylbut-2-enyl diphosphate reductase (316 aa).

A [4Fe-4S] cluster-binding site is contributed by C12. The (2E)-4-hydroxy-3-methylbut-2-enyl diphosphate site is built by H41 and H74. Positions 41 and 74 each coordinate dimethylallyl diphosphate. Positions 41 and 74 each coordinate isopentenyl diphosphate. C96 serves as a coordination point for [4Fe-4S] cluster. Residue H124 coordinates (2E)-4-hydroxy-3-methylbut-2-enyl diphosphate. A dimethylallyl diphosphate-binding site is contributed by H124. Position 124 (H124) interacts with isopentenyl diphosphate. E126 functions as the Proton donor in the catalytic mechanism. A (2E)-4-hydroxy-3-methylbut-2-enyl diphosphate-binding site is contributed by T169. C199 is a [4Fe-4S] cluster binding site. 4 residues coordinate (2E)-4-hydroxy-3-methylbut-2-enyl diphosphate: S227, S228, N229, and S271. Dimethylallyl diphosphate is bound by residues S227, S228, N229, and S271. 4 residues coordinate isopentenyl diphosphate: S227, S228, N229, and S271.

This sequence belongs to the IspH family. The cofactor is [4Fe-4S] cluster.

It carries out the reaction isopentenyl diphosphate + 2 oxidized [2Fe-2S]-[ferredoxin] + H2O = (2E)-4-hydroxy-3-methylbut-2-enyl diphosphate + 2 reduced [2Fe-2S]-[ferredoxin] + 2 H(+). It catalyses the reaction dimethylallyl diphosphate + 2 oxidized [2Fe-2S]-[ferredoxin] + H2O = (2E)-4-hydroxy-3-methylbut-2-enyl diphosphate + 2 reduced [2Fe-2S]-[ferredoxin] + 2 H(+). Its pathway is isoprenoid biosynthesis; dimethylallyl diphosphate biosynthesis; dimethylallyl diphosphate from (2E)-4-hydroxy-3-methylbutenyl diphosphate: step 1/1. The protein operates within isoprenoid biosynthesis; isopentenyl diphosphate biosynthesis via DXP pathway; isopentenyl diphosphate from 1-deoxy-D-xylulose 5-phosphate: step 6/6. Catalyzes the conversion of 1-hydroxy-2-methyl-2-(E)-butenyl 4-diphosphate (HMBPP) into a mixture of isopentenyl diphosphate (IPP) and dimethylallyl diphosphate (DMAPP). Acts in the terminal step of the DOXP/MEP pathway for isoprenoid precursor biosynthesis. The protein is 4-hydroxy-3-methylbut-2-enyl diphosphate reductase of Vibrio cholerae serotype O1 (strain ATCC 39315 / El Tor Inaba N16961).